The following is a 642-amino-acid chain: Sodium-dependent phosphate transport protein 2A (642 aa).

The Cytoplasmic segment spans residues Met1 to Lys106. A phosphoserine mark is found at Ser14 and Ser37. The chain crosses the membrane as a helical span at residues Leu107 to Phe128. Topologically, residues Gln129–Asn148 are extracellular. A helical membrane pass occupies residues Pro149–Ser166. Over Ser167–Thr168 the chain is Cytoplasmic. A helical transmembrane segment spans residues Ala169–Ile188. The Extracellular portion of the chain corresponds to Pro189–Asp350. 2 disulfides stabilise this stretch: Cys228-Cys525 and Cys309-Cys339. N-linked (GlcNAc...) asparagine glycosylation is found at Asn301, Asn326, and Asn333. A helical membrane pass occupies residues Leu351–Val373. Over Lys374–Met415 the chain is Cytoplasmic. A helical transmembrane segment spans residues Thr416–Ser439. The Extracellular segment spans residues Ile440–Lys469. A helical transmembrane segment spans residues Leu470 to Leu490. The Cytoplasmic portion of the chain corresponds to Trp491–Trp516. The residue at position 511 (Thr511) is a Phosphothreonine; by PKC. The chain crosses the membrane as a helical span at residues Phe517–Ser537. The Extracellular portion of the chain corresponds to Met538–Arg542. Residues Ala543–Leu564 form a helical membrane-spanning segment. Topologically, residues Gln565–Leu642 are cytoplasmic. Phosphoserine is present on Ser610. Thr626 is subject to Phosphothreonine. Ser628 is modified (phosphoserine).

Belongs to the SLC34A transporter family. As to quaternary structure, interacts via its C-terminal region with NHERF4. Interacts with NHERF1. Interacts with TMEM174; regulates SLC34A1 internalization by PTH and FGF23. As to expression, expressed in the kidney cortex.

The protein localises to the apical cell membrane. The protein resides in the cell membrane. It carries out the reaction 3 Na(+)(out) + phosphate(out) = 3 Na(+)(in) + phosphate(in). Transport activity is significantly increased in response to dietary phosphate deprivation. Its function is as follows. Involved in actively transporting phosphate into cells via Na(+) cotransport in the renal brush border membrane. The cotransport has a Na(+):Pi stoichiometry of 3:1 and is electrogenic. The chain is Sodium-dependent phosphate transport protein 2A from Oryctolagus cuniculus (Rabbit).